The chain runs to 610 residues: Autophagy-related protein 22-1 (610 aa).

The segment at 1–29 is disordered; that stretch reads MIFTSTPPAPPPADAQQRQPRYPGEDTTP. A helical transmembrane segment spans residues 41-61; it reads YGIAAEVFAVCGVGSFLPLTL. A glycan (N-linked (GlcNAc...) asparagine) is linked at asparagine 90. 3 helical membrane-spanning segments follow: residues 120–140, 153–173, and 177–197; these read SFAM…LISF, LLLT…FISP, and ILGA…FVVL. The segment at 216–242 is disordered; sequence KTEGEELPHLDSSGEYTRSGSFNRGDN. A compositionally biased stretch (polar residues) spans 229-239; that stretch reads GEYTRSGSFNR. The next 4 membrane-spanning stretches (helical) occupy residues 277-297, 310-330, 379-399, and 415-435; these read GVGL…LLLF, TLPL…FTVV, VVIF…VSGT, and VGLL…LWPV. N-linked (GlcNAc...) asparagine glycosylation occurs at asparagine 445. 4 helical membrane passes run 450 to 470, 485 to 507, 527 to 547, and 550 to 570; these read LCIA…IPLV, FPLG…SFFG, KGSS…TGQV, and GFFF…MVNA. The disordered stretch occupies residues 586 to 610; that stretch reads KSHGENSSEFGHPSEEAEGLLARNP. A glycan (N-linked (GlcNAc...) asparagine) is linked at asparagine 591.

This sequence belongs to the ATG22 family.

The protein resides in the vacuole membrane. Vacuolar effluxer which mediate the efflux of amino acids resulting from autophagic degradation. The release of autophagic amino acids allows the maintenance of protein synthesis and viability during nitrogen starvation. The sequence is that of Autophagy-related protein 22-1 (atg22-1) from Aspergillus clavatus (strain ATCC 1007 / CBS 513.65 / DSM 816 / NCTC 3887 / NRRL 1 / QM 1276 / 107).